A 122-amino-acid polypeptide reads, in one-letter code: Large ribosomal subunit protein uL14 (122 aa).

The protein belongs to the universal ribosomal protein uL14 family. As to quaternary structure, part of the 50S ribosomal subunit. Forms a cluster with proteins L3 and L19. In the 70S ribosome, L14 and L19 interact and together make contacts with the 16S rRNA in bridges B5 and B8.

Its function is as follows. Binds to 23S rRNA. Forms part of two intersubunit bridges in the 70S ribosome. This chain is Large ribosomal subunit protein uL14, found in Nitrobacter winogradskyi (strain ATCC 25391 / DSM 10237 / CIP 104748 / NCIMB 11846 / Nb-255).